The chain runs to 479 residues: Cyclin-dependent kinase F-1 (479 aa).

A Protein kinase domain is found at 24 to 419; sequence YEVLGRAGSG…AADLLNDPYF (396 aa). ATP-binding positions include 30–38 and Lys-53; that span reads AGSGAYADV. The active-site Proton acceptor is Asp-146. A Phosphothreonine modification is found at Thr-291. The segment at 429 to 479 is disordered; that stretch reads EGLQVPESKDEDDDSTEEWANFRGGDSDSDFDEFGSMDVTKTDKGFSIRFS. The span at 468–479 shows a compositional bias: basic and acidic residues; the sequence is TKTDKGFSIRFS.

The protein belongs to the protein kinase superfamily. CMGC Ser/Thr protein kinase family. CDC2/CDKX subfamily.

The enzyme catalyses L-seryl-[protein] + ATP = O-phospho-L-seryl-[protein] + ADP + H(+). It catalyses the reaction L-threonyl-[protein] + ATP = O-phospho-L-threonyl-[protein] + ADP + H(+). It carries out the reaction [DNA-directed RNA polymerase] + ATP = phospho-[DNA-directed RNA polymerase] + ADP + H(+). The protein is Cyclin-dependent kinase F-1 (CDKF-1) of Oryza sativa subsp. japonica (Rice).